A 321-amino-acid polypeptide reads, in one-letter code: Solute carrier family 25 member 33 (321 aa).

Solcar repeat units lie at residues Glu9–Gln118, Asn126–Tyr213, and Thr231–Leu315. The next 6 membrane-spanning stretches (helical) occupy residues Leu12–Leu32, Val49–Val65, Gly121–Ile141, Leu190–Leu210, Phe233–Pro253, and Gln298–Asp318.

This sequence belongs to the mitochondrial carrier (TC 2.A.29) family. As to expression, expressed in the central nervous system. Also expressed in testis and skeletal muscle. Weakly expressed in heart, liver, kidney, prostate, colon and peripheral blood leukocytes.

The protein resides in the mitochondrion inner membrane. It carries out the reaction UTP(in) + UDP(out) = UTP(out) + UDP(in). The enzyme catalyses dUTP(out) + UTP(in) = dUTP(in) + UTP(out). It catalyses the reaction 5-methyl-UTP(out) + UTP(in) = 5-methyl-UTP(in) + UTP(out). The catalysed reaction is 5-methyl-UDP(out) + UTP(in) = 5-methyl-UDP(in) + UTP(out). It carries out the reaction UTP(in) + CTP(out) = UTP(out) + CTP(in). The enzyme catalyses CDP(out) + UTP(in) = CDP(in) + UTP(out). It catalyses the reaction dCTP(out) + UTP(in) = dCTP(in) + UTP(out). The catalysed reaction is dCDP(out) + UTP(in) = dCDP(in) + UTP(out). It carries out the reaction UTP(in) + GTP(out) = UTP(out) + GTP(in). The enzyme catalyses UTP(in) + GDP(out) = UTP(out) + GDP(in). It catalyses the reaction dGTP(out) + UTP(in) = dGTP(in) + UTP(out). The catalysed reaction is dGDP(out) + UTP(in) = dGDP(in) + UTP(out). It carries out the reaction ITP(out) + UTP(in) = ITP(in) + UTP(out). With respect to regulation, inhibited by pyridoxal 5'-phosphate, 4,7-diphenyl-1,10-phenanthroline, tannic acid, and mercurials (mercury dichloride, mersalyl acid, p-hydroxymercuribenzoate). Functionally, mitochondrial transporter that imports/exports pyrimidine nucleotides into and from mitochondria. Selectively transports uridine, thymidine, guanosine, cytosine and inosine (deoxy)nucleoside di- and triphosphates by an antiport mechanism. May import (deoxy)nucleoside triphosphates in exchange for intramitochondrial (deoxy)nucleoside diphosphates, thus providing precursors necessary for de novo synthesis of mitochondrial DNA and RNA while exporting products of their catabolism. Participates in mitochondrial genome maintenance, regulation of mitochondrial membrane potential and mitochondrial respiration. Upon INS or IGF1 stimulation regulates cell growth and proliferation by controlling mitochondrial DNA replication and transcription, the ratio of mitochondria-to nuclear-encoded components of the electron transport chain resulting in control of mitochondrial ROS production. Participates in dendritic cell endocytosis and may associate with mitochondrial oxidative phosphorylation. This Homo sapiens (Human) protein is Solute carrier family 25 member 33 (SLC25A33).